The sequence spans 613 residues: Metacaspase-1 (613 aa).

Residues His404 and Cys460 contribute to the active site.

It belongs to the peptidase C14B family. As to quaternary structure, monomer.

Its activity is regulated as follows. Activated by Ca(2+). Functionally, cysteine protease that cleaves specifically after arginine or lysine residues. May play a role in apoptosis. The polypeptide is Metacaspase-1 (Plasmodium falciparum (isolate 3D7)).